The following is a 426-amino-acid chain: Enolase (426 aa).

Residue Gln-163 participates in (2R)-2-phosphoglycerate binding. Glu-205 acts as the Proton donor in catalysis. Mg(2+)-binding residues include Asp-242, Glu-283, and Asp-310. Lys-335, Arg-364, Ser-365, and Lys-386 together coordinate (2R)-2-phosphoglycerate. Residue Lys-335 is the Proton acceptor of the active site.

The protein belongs to the enolase family. The cofactor is Mg(2+).

It localises to the cytoplasm. The protein resides in the secreted. It is found in the cell surface. The enzyme catalyses (2R)-2-phosphoglycerate = phosphoenolpyruvate + H2O. It participates in carbohydrate degradation; glycolysis; pyruvate from D-glyceraldehyde 3-phosphate: step 4/5. Catalyzes the reversible conversion of 2-phosphoglycerate (2-PG) into phosphoenolpyruvate (PEP). It is essential for the degradation of carbohydrates via glycolysis. The polypeptide is Enolase (Leifsonia xyli subsp. xyli (strain CTCB07)).